Here is a 210-residue protein sequence, read N- to C-terminus: MAASVEQREGTIQVQGQALFFREALPGSGQARFSVLLLHGIRFSSETWQNLGTLHRLAQAGYRAVAIDLPGLGHSKEAAAPAPIGELAPGSFLAAVVDALELGPPVVISPSLSGMYSLPFLTAPGSQLPGFVPVAPICTDKINAANYASVKTPALIVYGDQDPMGQTSFEHLKQLPNHRVLIMKGAGHPCYLDKPEEWHTGLLDFLQGLQ.

Residue A2 is modified to N-acetylalanine. Phosphoserine is present on S91. Residues S111, D162, and H188 each act as charge relay system in the active site.

Belongs to the AB hydrolase superfamily. ABHD14 family. In terms of assembly, may interact with TAF1. In terms of tissue distribution, ubiquitous. Detected in spleen, thymus, prostate, testis, ovary, small intestine, colon, peripheral blood leukocyte, heart, placenta, lung, liver, skeletal muscle, pancreas and kidney.

The protein localises to the cytoplasm. The protein resides in the nucleus. The enzyme catalyses L-lysyl-[protein] + acetyl-CoA = N(6)-acetyl-L-lysyl-[protein] + CoA + H(+). In terms of biological role, acts as an atypical protein-lysine deacetylase in vitro. Catalyzes the deacetylation of lysine residues using CoA as substrate, generating acetyl-CoA and the free amine of protein-lysine residues. Additional experiments are however required to confirm the protein-lysine deacetylase activity in vivo. Has hydrolase activity towards various surrogate p-nitrophenyl (pNp) substrates, such as pNp-butyrate, pNp-acetate and pNp-octanoate in vitro, with a strong preference for pNp-acetate. May activate transcription. The sequence is that of Putative protein-lysine deacylase ABHD14B from Homo sapiens (Human).